A 361-amino-acid chain; its full sequence is Septin-2 (361 aa).

Residue Tyr17 is modified to Phosphotyrosine. The Septin-type G domain occupies 34–306; sequence KGFEFTLMVV…ENFRSERLKR (273 aa). Positions 44–51 are G1 motif; it reads GESGLGKS. GTP is bound by residues 44–51, Thr78, Gly104, and 183–191; these read GESGLGKS and KADTLTLKE. The interval 101–104 is G3 motif; the sequence is DTPG. The interval 182 to 185 is G4 motif; sequence AKAD. Lys190 carries the post-translational modification N6-acetyllysine. The residue at position 211 (Tyr211) is a Phosphotyrosine. A Phosphoserine modification is found at Ser218. GTP is bound by residues Gly241 and Arg256. An important for dimerization region spans residues 260-270; the sequence is WGVVEVENPEH.

This sequence belongs to the TRAFAC class TrmE-Era-EngA-EngB-Septin-like GTPase superfamily. Septin GTPase family. In terms of assembly, septins polymerize into heterooligomeric protein complexes that form filaments, and associate with cellular membranes, actin filaments and microtubules. GTPase activity is required for filament formation. Septin filaments are assembled from asymmetrical heterotrimers, composed of SEPTIN2, SEPTIN6 and SEPTIN7 that associate head-to-head to form a hexameric unit. Interaction between SEPTIN2 and SEPTIN7 seems indirect. Also interacts with SEPTIN9 and SEPTIN5. Interaction with SEPTIN4 not detected. Component of a septin core octameric complex consisting of SEPTIN12, SEPTIN7, SEPTIN6 and SEPTIN2 or SEPTIN4 in the order 12-7-6-2-2-6-7-12 or 12-7-6-4-4-6-7-12 and located in the sperm annulus. Interacts with MAP4. Interacts with DZIP1L.

The protein resides in the cytoplasm. It is found in the cytoskeleton. The protein localises to the spindle. It localises to the cleavage furrow. Its subcellular location is the midbody. The protein resides in the cell cortex. It is found in the cell projection. The protein localises to the cilium membrane. It localises to the cilium. Its subcellular location is the flagellum. In terms of biological role, filament-forming cytoskeletal GTPase. Forms a filamentous structure with SEPTIN12, SEPTIN6, SEPTIN2 and probably SEPTIN4 at the sperm annulus which is required for the structural integrity and motility of the sperm tail during postmeiotic differentiation. Required for normal organization of the actin cytoskeleton. Plays a role in the biogenesis of polarized columnar-shaped epithelium by maintaining polyglutamylated microtubules, thus facilitating efficient vesicle transport, and by impeding MAP4 binding to tubulin. Required for the progression through mitosis. Forms a scaffold at the midplane of the mitotic splindle required to maintain CENPE localization at kinetochores and consequently chromosome congression. During anaphase, may be required for chromosome segregation and spindle elongation. Plays a role in ciliogenesis and collective cell movements. In cilia, required for the integrity of the diffusion barrier at the base of the primary cilium that prevents diffusion of transmembrane proteins between the cilia and plasma membranes: probably acts by regulating the assembly of the tectonic-like complex (also named B9 complex) by localizing TMEM231 protein. In Rattus norvegicus (Rat), this protein is Septin-2.